The sequence spans 212 residues: Large ribosomal subunit protein uL3 (212 aa).

The tract at residues 119–147 (YQGNIKRWGQSRGPETHGSRYHRIPGSMG) is disordered.

It belongs to the universal ribosomal protein uL3 family. In terms of assembly, part of the 50S ribosomal subunit. Forms a cluster with proteins L14 and L19.

One of the primary rRNA binding proteins, it binds directly near the 3'-end of the 23S rRNA, where it nucleates assembly of the 50S subunit. The protein is Large ribosomal subunit protein uL3 of Lactobacillus acidophilus (strain ATCC 700396 / NCK56 / N2 / NCFM).